A 328-amino-acid chain; its full sequence is Putative tyrosine-protein kinase C03B1.5 (328 aa).

Positions 25–288 (WSPALKIGSG…ALHASSQTYL (264 aa)) constitute a Protein kinase domain. Residues 31–39 (IGSGAFGEV) and K62 contribute to the ATP site. The Proton acceptor role is filled by D155.

This sequence belongs to the protein kinase superfamily. Tyr protein kinase family.

The enzyme catalyses L-tyrosyl-[protein] + ATP = O-phospho-L-tyrosyl-[protein] + ADP + H(+). This is Putative tyrosine-protein kinase C03B1.5 from Caenorhabditis elegans.